A 299-amino-acid polypeptide reads, in one-letter code: Phosphatidylserine decarboxylase proenzyme (299 aa).

Catalysis depends on charge relay system; for autoendoproteolytic cleavage activity residues Asp115, His171, and Ser258. Ser258 functions as the Schiff-base intermediate with substrate; via pyruvic acid; for decarboxylase activity in the catalytic mechanism. Ser258 is subject to Pyruvic acid (Ser); by autocatalysis.

It belongs to the phosphatidylserine decarboxylase family. PSD-B subfamily. Prokaryotic type II sub-subfamily. Heterodimer of a large membrane-associated beta subunit and a small pyruvoyl-containing alpha subunit. Requires pyruvate as cofactor. In terms of processing, is synthesized initially as an inactive proenzyme. Formation of the active enzyme involves a self-maturation process in which the active site pyruvoyl group is generated from an internal serine residue via an autocatalytic post-translational modification. Two non-identical subunits are generated from the proenzyme in this reaction, and the pyruvate is formed at the N-terminus of the alpha chain, which is derived from the carboxyl end of the proenzyme. The autoendoproteolytic cleavage occurs by a canonical serine protease mechanism, in which the side chain hydroxyl group of the serine supplies its oxygen atom to form the C-terminus of the beta chain, while the remainder of the serine residue undergoes an oxidative deamination to produce ammonia and the pyruvoyl prosthetic group on the alpha chain. During this reaction, the Ser that is part of the protease active site of the proenzyme becomes the pyruvoyl prosthetic group, which constitutes an essential element of the active site of the mature decarboxylase.

The protein resides in the cell membrane. It catalyses the reaction a 1,2-diacyl-sn-glycero-3-phospho-L-serine + H(+) = a 1,2-diacyl-sn-glycero-3-phosphoethanolamine + CO2. It functions in the pathway phospholipid metabolism; phosphatidylethanolamine biosynthesis; phosphatidylethanolamine from CDP-diacylglycerol: step 2/2. Its function is as follows. Catalyzes the formation of phosphatidylethanolamine (PtdEtn) from phosphatidylserine (PtdSer). This Chlamydia felis (strain Fe/C-56) (Chlamydophila felis) protein is Phosphatidylserine decarboxylase proenzyme.